Here is a 137-residue protein sequence, read N- to C-terminus: Basic phospholipase A2 homolog Bsc-K49 (137 aa).

Positions 1 to 16 (MRTLWIVAVLLVGVEG) are cleaved as a signal peptide. Intrachain disulfides connect Cys-42–Cys-131, Cys-44–Cys-60, Cys-59–Cys-111, Cys-65–Cys-137, Cys-66–Cys-104, Cys-73–Cys-97, and Cys-91–Cys-102. Positions 121–133 (KNYKITMKMFCKK) are important for membrane-damaging activities in eukaryotes and bacteria; heparin-binding.

It belongs to the phospholipase A2 family. Group II subfamily. K49 sub-subfamily. In terms of assembly, homodimer; non-covalently linked. In terms of tissue distribution, expressed by the venom gland.

The protein localises to the secreted. Functionally, snake venom phospholipase A2 that lacks enzymatic activity. Is myotoxic, and displays edema-inducing activities. A model of myotoxic mechanism has been proposed: an apo Lys49-PLA2 is activated by the entrance of a hydrophobic molecule (e.g. fatty acid) at the hydrophobic channel of the protein leading to a reorientation of a monomer. This reorientation causes a transition between 'inactive' to 'active' states, causing alignment of C-terminal and membrane-docking sites (MDoS) side-by-side and putting the membrane-disruption sites (MDiS) in the same plane, exposed to solvent and in a symmetric position for both monomers. The MDoS region stabilizes the toxin on membrane by the interaction of charged residues with phospholipid head groups. Subsequently, the MDiS region destabilizes the membrane with penetration of hydrophobic residues. This insertion causes a disorganization of the membrane, allowing an uncontrolled influx of ions (i.e. calcium and sodium), and eventually triggering irreversible intracellular alterations and cell death. The sequence is that of Basic phospholipase A2 homolog Bsc-K49 from Bothriechis schlegelii (Eyelash palm pitviper).